The chain runs to 74 residues: Alpha-conotoxin GeXIVA (74 aa).

The first 22 residues, 1–22, serve as a signal peptide directing secretion; that stretch reads MKLTCVLIITVLFLTACQLTTA. Positions 23 to 46 are excised as a propeptide; the sequence is VTYSRGEHKHRALMSTGTNYRLPK. The interacts with alpha-9-alpha-10 (CHRNA9-CHRNA10) nAChR stretch occupies residues 56–64; that stretch reads RSPYDRRRR.

Belongs to the conotoxin O1 superfamily. The native disulfide bond pairing has not been studied. Three isomers may exist: the bead isomer (I-II; III-IV), the globular isomer (I-III; II-IV), the ribbon isomer (I-IV; II-III). They have all been synthesized and their activity tested. All of them show similar potency on alpha-9-alpha-10 (CHRNA9-CHRNA10) nAChR, showing that disulfide bonds does not significantly affect their activity. In addition, removal of disulfide bonds does not affect the activity on alpha-9-alpha-10 (CHRNA9-CHRNA10) nAChR either. In terms of tissue distribution, expressed by the venom duct.

It is found in the secreted. Alpha-conotoxins act on postsynaptic membranes, they bind to the nicotinic acetylcholine receptors (nAChR) and thus inhibit them. This toxin is very potent on alpha-9-alpha-10/CHRNA9-CHRNA10 nAChR (IC(50)=4.61-12 nM for the bead isomer (I-II; III-IV), IC(50)=7-16 nM for the ribbon isomer (I-IV; II-III) and IC(50)=22.7 nM for the globular isomer (I-III; II-IV)). The bead isomer also shows a weak inhibition on other nAChRs (alpha-1-beta-1-delta-epsilon/CHRNA1-CHRNB1-CHRND-CHRNE, alpha-7/CHRNA7, alpha-6/alpha-3-beta-2-beta-3 (CHRNA6/CHRNA3-CHRNB2-CHRNB3), alpha-3-beta-2/CHRNA3-CHRNB2, alpha-2-beta-2/CHRNA2-CHRNB2, alpha-6/alpha-3-beta-4 (CHRNA6/CHRNA3-CHRNB4), alpha-4-beta-2/CHRNA4-CHRNB2, alpha-4-beta-4/CHRNA4-CHRNB4, alpha-2-beta-4/CHRNA2-CHRNB4, alpha-3-beta-4/CHRNA3-CHRNB4). The toxin blockade is voltage-dependent, and its binding site does not overlap with the binding site of the competitive antagonist alpha-conotoxin RgIA. The toxin inhibits Sf9 cell growth. Both the bead and ribbon isomers relieve pain effects in the rat chronic constriction injury (CCI) model of neuropathic pain, and in the acute pain model of tail flick test, but have no effect on motor performance. This Conus generalis (General cone) protein is Alpha-conotoxin GeXIVA.